The chain runs to 90 residues: UPF0213 protein lin0209 (90 aa).

In terms of domain architecture, GIY-YIG spans 5–80 (NEHFFYVLKC…KKLSRKNKDS (76 aa)).

The protein belongs to the UPF0213 family.

This is UPF0213 protein lin0209 from Listeria innocua serovar 6a (strain ATCC BAA-680 / CLIP 11262).